Consider the following 179-residue polypeptide: MARFQEFYRETVVPKLIEQFGYKSVMEVPRIQKITLNMGVGEAVADKKVMDHAVADMQKIAGQKPVVTKSKKSIAGFKIRENYPVGCMVTLRRGQMYEFLDRLVTVALPRVRDFRGVSGKSFDGRGNYNMGIKEQIIFPEIEYDKIDALRGMNITITTTAKTDDEARALLAAFSFPFKN.

This sequence belongs to the universal ribosomal protein uL5 family. In terms of assembly, part of the 50S ribosomal subunit; part of the 5S rRNA/L5/L18/L25 subcomplex. Contacts the 5S rRNA and the P site tRNA. Forms a bridge to the 30S subunit in the 70S ribosome.

Functionally, this is one of the proteins that bind and probably mediate the attachment of the 5S RNA into the large ribosomal subunit, where it forms part of the central protuberance. In the 70S ribosome it contacts protein S13 of the 30S subunit (bridge B1b), connecting the 2 subunits; this bridge is implicated in subunit movement. Contacts the P site tRNA; the 5S rRNA and some of its associated proteins might help stabilize positioning of ribosome-bound tRNAs. The chain is Large ribosomal subunit protein uL5 from Thiobacillus denitrificans (strain ATCC 25259 / T1).